The primary structure comprises 767 residues: Polyribonucleotide nucleotidyltransferase (767 aa).

Asp509 and Asp515 together coordinate Mg(2+). The KH domain maps to 575–634; sequence PRILTVKVPIDKIGEVIGPKGKMINSIQDETGAEITIEDDGTIYIGATDGPSAEAARDAI. The region spanning 646–718 is the S1 motif domain; that stretch reads GERYLGTVVK…ERGKLSLVPV (73 aa). Residues 725 to 767 form a disordered region; it reads AVAAPNGGESPNGAKKTDASGNGAKQPRRRRRTRSSSRSSENT. The span at 750–759 shows a compositional bias: basic residues; the sequence is QPRRRRRTRS.

The protein belongs to the polyribonucleotide nucleotidyltransferase family. Mg(2+) is required as a cofactor.

Its subcellular location is the cytoplasm. It carries out the reaction RNA(n+1) + phosphate = RNA(n) + a ribonucleoside 5'-diphosphate. In terms of biological role, involved in mRNA degradation. Catalyzes the phosphorolysis of single-stranded polyribonucleotides processively in the 3'- to 5'-direction. In Thermobifida fusca (strain YX), this protein is Polyribonucleotide nucleotidyltransferase.